The following is a 137-amino-acid chain: Acidic phospholipase A2 beta-bungarotoxin A6 chain (137 aa).

A signal peptide spans 1–9 (AVCVSLLGA). Residues 10–17 (ANIPPQHL) constitute a propeptide that is removed on maturation. 6 disulfides stabilise this stretch: cysteine 44-cysteine 136, cysteine 46-cysteine 62, cysteine 61-cysteine 117, cysteine 68-cysteine 110, cysteine 78-cysteine 103, and cysteine 96-cysteine 108. Residues tyrosine 45, glycine 47, and glycine 49 each coordinate Ca(2+). Residue histidine 65 is part of the active site. Ca(2+) is bound at residue aspartate 66. Aspartate 111 is an active-site residue.

Belongs to the phospholipase A2 family. Group I subfamily. D49 sub-subfamily. As to quaternary structure, heterodimer; disulfide-linked. The A chains have phospholipase A2 activity and the B chains show homology with the basic protease inhibitors. Ca(2+) serves as cofactor. As to expression, expressed by the venom gland.

Its subcellular location is the secreted. It catalyses the reaction a 1,2-diacyl-sn-glycero-3-phosphocholine + H2O = a 1-acyl-sn-glycero-3-phosphocholine + a fatty acid + H(+). Its function is as follows. Snake venom phospholipase A2 (PLA2) that inhibits neuromuscular transmission by blocking acetylcholine release from the nerve termini. PLA2 catalyzes the calcium-dependent hydrolysis of the 2-acyl groups in 3-sn-phosphoglycerides. This Bungarus multicinctus (Many-banded krait) protein is Acidic phospholipase A2 beta-bungarotoxin A6 chain.